The chain runs to 1521 residues: Suppressor of Ty 6 homolog (1521 aa).

Residues 1 to 204 are disordered; that stretch reads MDFIDNQAEE…EGAEDDARDV (204 aa). Over residues 26–41 the composition is skewed to basic residues; sequence KKMKMAKDKLKKKKKV. The Nuclear localization signal signature appears at 26–42; it reads KKMKMAKDKLKKKKKVV. 2 stretches are compositionally biased toward acidic residues: residues 45–56 and 67–76; these read SDEDEDDEDDEE and ADEDDEEEDA. Over residues 77–89 the composition is skewed to basic and acidic residues; it reads RSEKSDRSRRSEI. Over residues 90–103 the composition is skewed to acidic residues; sequence NDELDDEDLDLIDE. Over residues 127 to 149 the composition is skewed to basic and acidic residues; the sequence is PIRRSNQDDDDLQSERGSDDGDK. Residues 167–177 show a composition bias toward acidic residues; sequence RSEDDFIEDDG. The 70-residue stretch at 1182–1251 folds into the S1 motif domain; the sequence is LNAGRPGGCV…EKFSILLSCK (70 aa). In terms of domain architecture, SH2 spans 1299–1388; it reads HPNFHNVSYE…IARFVLPMIQ (90 aa). Positions 1490–1521 are disordered; it reads GIRSSLSYRPTGRTGPPPSAPYQQPPQQQYYR. Residues 1504-1513 are compositionally biased toward pro residues; that stretch reads GPPPSAPYQQ.

The protein belongs to the SPT6 family. In terms of assembly, interacts with glp-1 and lin-12.

Its subcellular location is the nucleus. Its function is as follows. Histone H3-H4 chaperone that plays a role in maintenance of chromatin structure during RNA polymerase II transcription elongation. May be required for several aspects of morphogenesis of C.briggsae, including regulation of division in the germline and gut and specification of ventral-uterine precursor cell fate. This Caenorhabditis briggsae protein is Suppressor of Ty 6 homolog (emb-5).